Reading from the N-terminus, the 529-residue chain is Putative amidohydrolase YtcJ (529 aa).

Belongs to the metallo-dependent hydrolases superfamily.

The polypeptide is Putative amidohydrolase YtcJ (ytcJ) (Bacillus subtilis (strain 168)).